The chain runs to 1005 residues: Translation initiation factor IF-2 (1005 aa).

Disordered stretches follow at residues 54–337 (KYVP…RRPQ) and 368–414 (PKPK…PTSV). A compositionally biased stretch (polar residues) spans 58–73 (SPSTHSMPPTRPTSHS). The segment covering 75 to 86 (PLPPQPGKPQPK) has biased composition (pro residues). Over residues 146-157 (GSNSPSHSESTP) the composition is skewed to polar residues. Composition is skewed to low complexity over residues 189 to 198 (PSPAAMAGRA) and 222 to 240 (VESA…PRAE). The segment covering 258–274 (PRSETSEDGARRGEKLV) has biased composition (basic and acidic residues). The segment covering 392–401 (GGRKLSRRDR) has biased composition (basic residues). The region spanning 495 to 668 (RRPPVVTIMG…LLVSEVEDLY (174 aa)) is the tr-type G domain. Positions 504-511 (GHVDHGKT) are G1. 504–511 (GHVDHGKT) lines the GTP pocket. Positions 529–533 (GITQH) are G2. Residues 554-557 (DTPG) are G3. Residues 554–558 (DTPGH) and 608–611 (NKID) contribute to the GTP site. Residues 608 to 611 (NKID) form a G4 region. Residues 644–646 (SAI) form a G5 region.

It belongs to the TRAFAC class translation factor GTPase superfamily. Classic translation factor GTPase family. IF-2 subfamily.

Its subcellular location is the cytoplasm. One of the essential components for the initiation of protein synthesis. Protects formylmethionyl-tRNA from spontaneous hydrolysis and promotes its binding to the 30S ribosomal subunits. Also involved in the hydrolysis of GTP during the formation of the 70S ribosomal complex. The chain is Translation initiation factor IF-2 from Cyanothece sp. (strain PCC 7425 / ATCC 29141).